The following is a 530-amino-acid chain: T-complex protein 1 subunit gamma (530 aa).

Belongs to the TCP-1 chaperonin family. Heterooligomeric complex of about 850 to 900 kDa that forms two stacked rings, 12 to 16 nm in diameter.

The protein resides in the cytoplasm. Molecular chaperone; assists the folding of proteins upon ATP hydrolysis. Known to play a role, in vitro, in the folding of actin and tubulin. The sequence is that of T-complex protein 1 subunit gamma (cct3) from Dictyostelium discoideum (Social amoeba).